Here is a 256-residue protein sequence, read N- to C-terminus: MTRLLSAHRKVVADQGRLLEALESALGELVRSSPSRTDCSSLEAEQCAVGCFAMDPLVAAEGEVLLCLDPADLEQERFSYLLECLHGAFLRGVTIRCICAESMINLPGGRSYIQELQTAGAEIRVAPLLPFRLMLVDRIFACVSVVDRHGENSTLEIRSPETCHFVHRVFDYCWVTRTSSKACETADAIDVSDREVIILRLLANGMKDVAMARSLGISTRTLRRVITDLMGKLGVSSRFQLGARAAECRLLWSVLS.

In terms of domain architecture, HTH luxR-type spans 184 to 249; that stretch reads ETADAIDVSD…QLGARAAECR (66 aa). Residues 208–227 constitute a DNA-binding region (H-T-H motif); sequence DVAMARSLGISTRTLRRVIT.

In terms of biological role, involved in the regulation of the biosynthesis of phosphinothricin tripeptide (PTT), also known as bialaphos (BA), a natural-product antibiotic and potent herbicide. This Streptomyces hygroscopicus protein is Bialaphos biosynthetic pathway regulatory protein (brpA).